The following is a 189-amino-acid chain: HGPRTase-like protein (189 aa).

It belongs to the purine/pyrimidine phosphoribosyltransferase family. Archaeal HPRT subfamily.

Functionally, may catalyze a purine salvage reaction, the substrate is unknown. The chain is HGPRTase-like protein from Halorubrum lacusprofundi (strain ATCC 49239 / DSM 5036 / JCM 8891 / ACAM 34).